Here is a 66-residue protein sequence, read N- to C-terminus: MAVPKKKTSKSRRNMRRSHLALGKVNVIVDSQTGEYKLPHHVSLVDGTYNNRLVVTKKIKTEEEVA.

This sequence belongs to the bacterial ribosomal protein bL32 family.

The protein is Large ribosomal subunit protein bL32 of Rickettsia conorii (strain ATCC VR-613 / Malish 7).